Consider the following 141-residue polypeptide: Large ribosomal subunit protein uL11 (141 aa).

This sequence belongs to the universal ribosomal protein uL11 family. In terms of assembly, part of the ribosomal stalk of the 50S ribosomal subunit. Interacts with L10 and the large rRNA to form the base of the stalk. L10 forms an elongated spine to which L12 dimers bind in a sequential fashion forming a multimeric L10(L12)X complex. One or more lysine residues are methylated.

In terms of biological role, forms part of the ribosomal stalk which helps the ribosome interact with GTP-bound translation factors. The protein is Large ribosomal subunit protein uL11 of Chlamydia abortus (strain DSM 27085 / S26/3) (Chlamydophila abortus).